The following is a 483-amino-acid chain: HSPB1-associated protein 1 (483 aa).

A disordered region spans residues 1 to 26 (MAAGCEGIAPPTLGERTVGEEGEPVK). The tract at residues 88–208 (ETECSYVDAT…EDTPFLYPTR (121 aa)) is interaction with HSPB1. Residues 124-288 (WAYADYKYFV…HLARVEEAIT (165 aa)) form the JmjC domain. Residues 388–416 (LIPVTPASEERGGALEGDSEESVSSNGGH) are disordered.

Interacts with CRYAB and HSPB1.

Its subcellular location is the cytoplasm. In terms of biological role, may play a role in cellular stress response. The chain is HSPB1-associated protein 1 (Hspbap1) from Mus musculus (Mouse).